The primary structure comprises 744 residues: Integrator complex subunit 11 homolog (744 aa).

Residues His67, His69, Asp71, His72, His156, and Asp177 each contribute to the Zn(2+) site. The HXHXDH motif motif lies at 67 to 72 (HFHLDH). Residue Glu202 is part of the active site. Zn(2+) is bound at residue His425. Residues 626–669 (NNNTSDDNNNNNNNNNNNNNNNNNNNNNNNNNNNNNNNNNNNNN) are disordered.

Belongs to the metallo-beta-lactamase superfamily. RNA-metabolizing metallo-beta-lactamase-like family. INTS11 subfamily. In terms of assembly, component of the Integrator complex. The core complex associates with protein phosphatase 2A subunits, to form the Integrator-PP2A (INTAC) complex. Zn(2+) serves as cofactor.

Its subcellular location is the nucleus. It localises to the cytoplasm. RNA endonuclease component of the integrator complex, a multiprotein complex that terminates RNA polymerase II (Pol II) transcription in the promoter-proximal region of genes. The integrator complex provides a quality checkpoint during transcription elongation by driving premature transcription termination of transcripts that are unfavorably configured for transcriptional elongation: the complex terminates transcription by (1) catalyzing dephosphorylation of the C-terminal domain (CTD) of Pol II subunit polr2a, (2) degrading the exiting nascent RNA transcript via endonuclease activity and (3) promoting the release of Pol II from bound DNA. The integrator complex is also involved in terminating the synthesis of non-coding Pol II transcripts, such as enhancer RNAs (eRNAs), small nuclear RNAs (snRNAs), telomerase RNAs and long non-coding RNAs (lncRNAs). Within the integrator complex, INTS11 constitutes the RNA endonuclease subunit that degrades exiting nascent RNA transcripts. The chain is Integrator complex subunit 11 homolog (ints11) from Dictyostelium discoideum (Social amoeba).